We begin with the raw amino-acid sequence, 955 residues long: Eukaryotic translation initiation factor 3 subunit C (955 aa).

Disordered stretches follow at residues 1–22 and 157–299; these read MSRF…SEPV and RAAP…EEGW. A compositionally biased stretch (acidic residues) spans 162-183; it reads DFAEEEEDDEREDEKGSDEEEE. Residues 206-218 are compositionally biased toward low complexity; it reads VKPVADSDSSDWG. Residues 219 to 229 show a composition bias toward acidic residues; the sequence is SDSDSDSTSSD. Basic and acidic residues predominate over residues 230–250; the sequence is EDAKYTSIRDRFLKKPEKGTE. Over residues 288–297 the composition is skewed to acidic residues; it reads MFDENEEEEE. A PCI domain is found at 658-834; the sequence is FHMHINLELL…ETIVMHRSEP (177 aa). Residues 865–955 are disordered; the sequence is NFFQRGGNQG…RNVEYQNKAE (91 aa). Positions 882-894 are enriched in low complexity; it reads YRNQNQNQNWNNN. The segment covering 911 to 955 has biased composition (basic and acidic residues); that stretch reads GEGREQREHHRDHHRDQREHREHQNREFREQREQMRNVEYQNKAE.

It belongs to the eIF-3 subunit C family. As to quaternary structure, component of the eukaryotic translation initiation factor 3 (eIF-3) complex.

The protein resides in the cytoplasm. Functionally, component of the eukaryotic translation initiation factor 3 (eIF-3) complex, which is involved in protein synthesis of a specialized repertoire of mRNAs and, together with other initiation factors, stimulates binding of mRNA and methionyl-tRNAi to the 40S ribosome. The eIF-3 complex specifically targets and initiates translation of a subset of mRNAs involved in cell proliferation. This Anopheles gambiae (African malaria mosquito) protein is Eukaryotic translation initiation factor 3 subunit C.